A 291-amino-acid chain; its full sequence is ATP synthase gamma chain (291 aa).

Belongs to the ATPase gamma chain family. In terms of assembly, F-type ATPases have 2 components, CF(1) - the catalytic core - and CF(0) - the membrane proton channel. CF(1) has five subunits: alpha(3), beta(3), gamma(1), delta(1), epsilon(1). CF(0) has three main subunits: a, b and c.

The protein resides in the cell inner membrane. In terms of biological role, produces ATP from ADP in the presence of a proton gradient across the membrane. The gamma chain is believed to be important in regulating ATPase activity and the flow of protons through the CF(0) complex. This chain is ATP synthase gamma chain, found in Chlorobium limicola (strain DSM 245 / NBRC 103803 / 6330).